Here is a 407-residue protein sequence, read N- to C-terminus: Imidazolonepropionase (407 aa).

Fe(3+) contacts are provided by His-74 and His-76. His-74 and His-76 together coordinate Zn(2+). 3 residues coordinate 4-imidazolone-5-propanoate: Arg-83, Tyr-146, and His-179. Tyr-146 serves as a coordination point for N-formimidoyl-L-glutamate. His-244 is a Fe(3+) binding site. His-244 contributes to the Zn(2+) binding site. Gln-247 provides a ligand contact to 4-imidazolone-5-propanoate. Asp-319 serves as a coordination point for Fe(3+). Asp-319 serves as a coordination point for Zn(2+). Residues Asn-321 and Gly-323 each contribute to the N-formimidoyl-L-glutamate site. Thr-324 serves as a coordination point for 4-imidazolone-5-propanoate.

Belongs to the metallo-dependent hydrolases superfamily. HutI family. It depends on Zn(2+) as a cofactor. Fe(3+) is required as a cofactor.

Its subcellular location is the cytoplasm. It catalyses the reaction 4-imidazolone-5-propanoate + H2O = N-formimidoyl-L-glutamate. It functions in the pathway amino-acid degradation; L-histidine degradation into L-glutamate; N-formimidoyl-L-glutamate from L-histidine: step 3/3. Catalyzes the hydrolytic cleavage of the carbon-nitrogen bond in imidazolone-5-propanoate to yield N-formimidoyl-L-glutamate. It is the third step in the universal histidine degradation pathway. This is Imidazolonepropionase from Salmonella typhimurium (strain LT2 / SGSC1412 / ATCC 700720).